The following is a 162-amino-acid chain: NADH-quinone oxidoreductase subunit I (162 aa).

2 4Fe-4S ferredoxin-type domains span residues Leu-53–Glu-83 and Thr-93–Val-122. Residues Cys-63, Cys-66, Cys-69, Cys-73, Cys-102, Cys-105, Cys-108, and Cys-112 each coordinate [4Fe-4S] cluster.

This sequence belongs to the complex I 23 kDa subunit family. In terms of assembly, NDH-1 is composed of 14 different subunits. Subunits NuoA, H, J, K, L, M, N constitute the membrane sector of the complex. [4Fe-4S] cluster serves as cofactor.

Its subcellular location is the cell inner membrane. It carries out the reaction a quinone + NADH + 5 H(+)(in) = a quinol + NAD(+) + 4 H(+)(out). NDH-1 shuttles electrons from NADH, via FMN and iron-sulfur (Fe-S) centers, to quinones in the respiratory chain. The immediate electron acceptor for the enzyme in this species is believed to be ubiquinone. Couples the redox reaction to proton translocation (for every two electrons transferred, four hydrogen ions are translocated across the cytoplasmic membrane), and thus conserves the redox energy in a proton gradient. The chain is NADH-quinone oxidoreductase subunit I from Nitrosomonas europaea (strain ATCC 19718 / CIP 103999 / KCTC 2705 / NBRC 14298).